We begin with the raw amino-acid sequence, 206 residues long: Large ribosomal subunit protein uL4 (206 aa).

The interval 44–87 is disordered; the sequence is KRQGTQKAKTRSEVRGGGRKPWRQKGTGHARQGSTRSPQWTGGG. A compositionally biased stretch (basic residues) spans 60–71; sequence GGRKPWRQKGTG.

The protein belongs to the universal ribosomal protein uL4 family. As to quaternary structure, part of the 50S ribosomal subunit.

One of the primary rRNA binding proteins, this protein initially binds near the 5'-end of the 23S rRNA. It is important during the early stages of 50S assembly. It makes multiple contacts with different domains of the 23S rRNA in the assembled 50S subunit and ribosome. Its function is as follows. Forms part of the polypeptide exit tunnel. The polypeptide is Large ribosomal subunit protein uL4 (Agathobacter rectalis (strain ATCC 33656 / DSM 3377 / JCM 17463 / KCTC 5835 / VPI 0990) (Eubacterium rectale)).